The primary structure comprises 368 residues: Glutamate 5-kinase 1 (368 aa).

K12 contacts ATP. 3 residues coordinate substrate: S52, D135, and N147. ATP is bound by residues 167–168 (SD) and 209–215 (TGGMKTK). In terms of domain architecture, PUA spans 274–348 (QGEVVVDGSF…DNEQSEFSEK (75 aa)).

Belongs to the glutamate 5-kinase family.

The protein resides in the cytoplasm. It catalyses the reaction L-glutamate + ATP = L-glutamyl 5-phosphate + ADP. It functions in the pathway amino-acid biosynthesis; L-proline biosynthesis; L-glutamate 5-semialdehyde from L-glutamate: step 1/2. Its function is as follows. Catalyzes the transfer of a phosphate group to glutamate to form L-glutamate 5-phosphate. The sequence is that of Glutamate 5-kinase 1 from Pseudoalteromonas translucida (strain TAC 125).